Reading from the N-terminus, the 93-residue chain is UPF0223 protein gbs1030 (93 aa).

Belongs to the UPF0223 family.

The chain is UPF0223 protein gbs1030 from Streptococcus agalactiae serotype III (strain NEM316).